The primary structure comprises 159 residues: 2-C-methyl-D-erythritol 2,4-cyclodiphosphate synthase (159 aa).

A divalent metal cation-binding residues include aspartate 10 and histidine 12. Residues 10–12 (DVH) and 36–37 (HS) each bind 4-CDP-2-C-methyl-D-erythritol 2-phosphate. Histidine 44 is a binding site for a divalent metal cation. Residues 58 to 60 (DIG), 63 to 67 (FANTD), 134 to 137 (TTNE), and arginine 144 each bind 4-CDP-2-C-methyl-D-erythritol 2-phosphate.

The protein belongs to the IspF family. As to quaternary structure, homotrimer. It depends on a divalent metal cation as a cofactor.

The enzyme catalyses 4-CDP-2-C-methyl-D-erythritol 2-phosphate = 2-C-methyl-D-erythritol 2,4-cyclic diphosphate + CMP. It functions in the pathway isoprenoid biosynthesis; isopentenyl diphosphate biosynthesis via DXP pathway; isopentenyl diphosphate from 1-deoxy-D-xylulose 5-phosphate: step 4/6. Involved in the biosynthesis of isopentenyl diphosphate (IPP) and dimethylallyl diphosphate (DMAPP), two major building blocks of isoprenoid compounds. Catalyzes the conversion of 4-diphosphocytidyl-2-C-methyl-D-erythritol 2-phosphate (CDP-ME2P) to 2-C-methyl-D-erythritol 2,4-cyclodiphosphate (ME-CPP) with a corresponding release of cytidine 5-monophosphate (CMP). The polypeptide is 2-C-methyl-D-erythritol 2,4-cyclodiphosphate synthase (Cytophaga hutchinsonii (strain ATCC 33406 / DSM 1761 / CIP 103989 / NBRC 15051 / NCIMB 9469 / D465)).